Reading from the N-terminus, the 247-residue chain is Tetraspanin-18 (247 aa).

At 1-15 (MEGDCLSCMKYLMFL) the chain is on the cytoplasmic side. Residues 16–36 (FNFFIFLGGACLLGVGIWVIV) traverse the membrane as a helical segment. Topologically, residues 37–49 (DPTGFREIVAANP) are extracellular. A helical membrane pass occupies residues 50-70 (LLFTGAYIMLAMGAMLFLLGF). Residues 71–82 (LGCCGAIRENKC) lie on the Cytoplasmic side of the membrane. The helical transmembrane segment at 83–103 (LLLFFFMFILLIFLAELSAAI) threads the bilayer. Residues 104–222 (LAFIFRENLT…SFETYVYLAG (119 aa)) are Extracellular-facing. N-linked (GlcNAc...) asparagine glycans are attached at residues asparagine 111 and asparagine 129. Residues 223–243 (ALAIGVLAIELFAMIFAMCLF) form a helical membrane-spanning segment. The Cytoplasmic portion of the chain corresponds to 244-247 (RGIQ).

It belongs to the tetraspanin (TM4SF) family.

It localises to the membrane. Its function is as follows. Maintains CDH6 protein and promotes CDH6-dependent adherens junctions, inhibiting neural crest migration. This Gallus gallus (Chicken) protein is Tetraspanin-18.